A 519-amino-acid chain; its full sequence is Sorting nexin-2 (519 aa).

Disordered stretches follow at residues 1–20 (MAAE…DFEE) and 30–103 (STVS…VTPV). Composition is skewed to low complexity over residues 30–44 (STVS…SPDP) and 93–103 (SSETSPAVTPV). A Phosphoserine modification is found at Ser97. A phosphothreonine mark is found at Thr101 and Thr104. 2 positions are modified to phosphoserine: Ser117 and Ser119. The PX domain maps to 140–269 (FDIEIGVSDP…QFLESSELPR (130 aa)). Positions 183, 185, 211, and 235 each coordinate a 1,2-diacyl-sn-glycero-3-phospho-(1D-myo-inositol-3-phosphate). A Phosphoserine modification is found at Ser185. The tract at residues 260-519 (QFLESSELPR…AFLPEAKAIA (260 aa)) is interaction with RhoG. Ser277 carries the phosphoserine modification. The membrane-binding amphipathic helix stretch occupies residues 278-295 (GAGILRMVNKAADAVNKM). A BAR domain is found at 299 to 519 (MNESDAWFEE…AFLPEAKAIA (221 aa)). Lys469 carries the N6-acetyllysine modification.

This sequence belongs to the sorting nexin family. In terms of assembly, predominantly forms heterodimers with BAR domain-containing sorting nexins SNX5, SNX6 and SNX32; can self-associate to form homodimers. The heterodimers are proposed to self-assemble into helical arrays on the membrane to stabilize and expand local membrane curvature underlying endosomal tubule formation. Thought to be a component of the originally described retromer complex (also called SNX-BAR retromer) which is a pentamer containing the heterotrimeric retromer cargo-selective complex (CSC), also decribed as vacuolar protein sorting subcomplex (VPS) and a heterodimeric membrane-deforming subcomplex formed between SNX1 or SNX2 and SNX5 or SNX6 (also called SNX-BAR subcomplex); the respective CSC and SNX-BAR subcomplexes associate with low affinity. Interacts with SNX5, SNX6, SNX32, VPS26A, VPS29, VPS35, FNBP1, KALRN, RHOG (GDP-bound form).

Its subcellular location is the early endosome membrane. It localises to the cell projection. The protein resides in the lamellipodium. Its function is as follows. Involved in several stages of intracellular trafficking. Interacts with membranes containing phosphatidylinositol 3-phosphate (PtdIns(3P)) or phosphatidylinositol 3,5-bisphosphate (PtdIns(3,5)P2). Acts in part as component of the retromer membrane-deforming SNX-BAR subcomplex. The SNX-BAR retromer mediates retrograde transport of cargo proteins from endosomes to the trans-Golgi network (TGN) and is involved in endosome-to-plasma membrane transport for cargo protein recycling. The SNX-BAR subcomplex functions to deform the donor membrane into a tubular profile called endosome-to-TGN transport carrier (ETC). Can sense membrane curvature and has in vitro vesicle-to-membrane remodeling activity. Required for retrograde endosome-to-TGN transport of TGN38. Promotes KALRN- and RHOG-dependent but retromer-independent membrane remodeling such as lamellipodium formation; the function is dependent on GEF activity of KALRN. The sequence is that of Sorting nexin-2 (SNX2) from Bos taurus (Bovine).